The sequence spans 245 residues: UDP-N-acetyl-D-mannosaminuronic acid transferase (245 aa).

It belongs to the glycosyltransferase 26 family.

The enzyme catalyses UDP-N-acetyl-alpha-D-mannosaminouronate + N-acetyl-alpha-D-glucosaminyl-di-trans,octa-cis-undecaprenyl diphosphate = beta-D-ManNAcA-(1-&gt;4)-alpha-D-GlcNAc-di-trans,octa-cis-undecaprenyl diphosphate + UDP + H(+). It functions in the pathway bacterial outer membrane biogenesis; enterobacterial common antigen biosynthesis. Catalyzes the synthesis of Und-PP-GlcNAc-ManNAcA (Lipid II), the second lipid-linked intermediate involved in enterobacterial common antigen (ECA) synthesis. The chain is UDP-N-acetyl-D-mannosaminuronic acid transferase from Proteus mirabilis (strain HI4320).